The following is a 1078-amino-acid chain: Exportin-1 (1078 aa).

One can recognise an Importin N-terminal domain in the interval 34–100; that stretch reads AQQVLTQFQA…RNYIVAVMIK (67 aa).

The protein belongs to the exportin family. In terms of assembly, interacts with php4.

The protein localises to the nucleus. Receptor for the leucine-rich nuclear export signal (NES). The polypeptide is Exportin-1 (xpo1) (Schizosaccharomyces pombe (strain 972 / ATCC 24843) (Fission yeast)).